Consider the following 307-residue polypeptide: Aspartate carbamoyltransferase catalytic subunit (307 aa).

Residues arginine 58 and threonine 59 each coordinate carbamoyl phosphate. Lysine 86 lines the L-aspartate pocket. Carbamoyl phosphate contacts are provided by arginine 108, histidine 138, and glutamine 141. L-aspartate contacts are provided by arginine 171 and arginine 223. Residues alanine 264 and proline 265 each contribute to the carbamoyl phosphate site.

It belongs to the aspartate/ornithine carbamoyltransferase superfamily. ATCase family. Heterododecamer (2C3:3R2) of six catalytic PyrB chains organized as two trimers (C3), and six regulatory PyrI chains organized as three dimers (R2).

It catalyses the reaction carbamoyl phosphate + L-aspartate = N-carbamoyl-L-aspartate + phosphate + H(+). It functions in the pathway pyrimidine metabolism; UMP biosynthesis via de novo pathway; (S)-dihydroorotate from bicarbonate: step 2/3. Its function is as follows. Catalyzes the condensation of carbamoyl phosphate and aspartate to form carbamoyl aspartate and inorganic phosphate, the committed step in the de novo pyrimidine nucleotide biosynthesis pathway. This is Aspartate carbamoyltransferase catalytic subunit from Streptococcus suis (strain 98HAH33).